Reading from the N-terminus, the 326-residue chain is MEALTFMKFWLTNNTTIKPRREIRISESAVDSTTGSEDPDLDLCEGEDSFFELKISLSDFKTPKEKQRLETTTTTTTYSVSNKSKVLPFVDISSKPQQSPTTLLKSGQKFRAFSFKKSEKSTTTEKKKEENNRTSLNVRFRVDDETTTTSFRKTASIARSQQTDDTMFDDSVSKRFFSLIKPLYTKSTKKQSSSTITSPTSSPATREKQRSNIPSGMRSVRRQLGKSRSASAAIGGMSPANRIDESLQVQQDGIQSAILHCKKSFHGSRESSLLSRSTSESSSQEKLSTSSSEDSYLFSRISSDSISEKSMDSLTSIKEQREKISD.

Disordered regions lie at residues 188–239 (TKKQ…GMSP) and 267–326 (GSRE…KISD). Composition is skewed to low complexity over residues 190 to 202 (KQSS…PTSS) and 270 to 305 (ESSL…SSDS).

Expressed in roots.

The protein localises to the cell membrane. It is found in the cytoplasm. It localises to the cytosol. In terms of biological role, positive effector of CLE45 peptide signaling. Post-transcriptionally regulated amplifier of the CLE45 peptide signal that acts downstream of BAM3 in the regulation of the transition of root protophloem cells from proliferation to differentiation; thus preventing primary root elongation but stimulating lateral roots development. The chain is Membrane-associated kinase regulator 5 from Arabidopsis thaliana (Mouse-ear cress).